The primary structure comprises 375 residues: Queuine tRNA-ribosyltransferase (375 aa).

The Proton acceptor role is filled by aspartate 89. Substrate is bound by residues 89 to 93 (DSGGF), aspartate 143, glutamine 187, and glycine 214. Positions 245–251 (GVGKPED) are RNA binding. Residue aspartate 264 is the Nucleophile of the active site. Residues 269–273 (TRNAR) form an RNA binding; important for wobble base 34 recognition region. Positions 302, 304, 307, and 333 each coordinate Zn(2+).

The protein belongs to the queuine tRNA-ribosyltransferase family. In terms of assembly, homodimer. Within each dimer, one monomer is responsible for RNA recognition and catalysis, while the other monomer binds to the replacement base PreQ1. Zn(2+) is required as a cofactor.

It catalyses the reaction 7-aminomethyl-7-carbaguanine + guanosine(34) in tRNA = 7-aminomethyl-7-carbaguanosine(34) in tRNA + guanine. It participates in tRNA modification; tRNA-queuosine biosynthesis. Catalyzes the base-exchange of a guanine (G) residue with the queuine precursor 7-aminomethyl-7-deazaguanine (PreQ1) at position 34 (anticodon wobble position) in tRNAs with GU(N) anticodons (tRNA-Asp, -Asn, -His and -Tyr). Catalysis occurs through a double-displacement mechanism. The nucleophile active site attacks the C1' of nucleotide 34 to detach the guanine base from the RNA, forming a covalent enzyme-RNA intermediate. The proton acceptor active site deprotonates the incoming PreQ1, allowing a nucleophilic attack on the C1' of the ribose to form the product. After dissociation, two additional enzymatic reactions on the tRNA convert PreQ1 to queuine (Q), resulting in the hypermodified nucleoside queuosine (7-(((4,5-cis-dihydroxy-2-cyclopenten-1-yl)amino)methyl)-7-deazaguanosine). In Aliivibrio fischeri (strain ATCC 700601 / ES114) (Vibrio fischeri), this protein is Queuine tRNA-ribosyltransferase.